The sequence spans 129 residues: Protein Turandot A (129 aa).

Positions 1–21 are cleaved as a signal peptide; sequence MNSSTALMCFALLLISPLCMG. Residue Asn49 is glycosylated (N-linked (GlcNAc...) asparagine).

The protein belongs to the Turandot family. As to expression, expressed in the fat body (at protein level).

It localises to the secreted. Functionally, a humoral factor that plays a role in stress tolerance; gives increased resistance to the lethal effects of bacterial challenge and stress. Regulated by the JAK/STAT pathway and NF-KB-like Relish pathway in the fat body, upd3 in the hemocytes and Mekk1 in response to septic injury and consequent immune response. The sequence is that of Protein Turandot A from Drosophila melanogaster (Fruit fly).